Here is a 369-residue protein sequence, read N- to C-terminus: MLMKTTAAHAPASQGTSGIVLDSLRVAYHGNVVLKPLSLTIEPGEVLALIGPSGSGKTTVLRAVAGFVQPAGGRILIGDTDVTHLPPYKRGLAMVVQNYALFPHLKVEDNVAFGLRAQKQPKALINERVTQALKTVGMSDYATRYPHQLSGGQQQRVAIARAIAVRPRVLLLDEPLSALDAQIRHNMVEEIARLHRELPELTILYVTHDQTEALTLADKIGIMKDGSLIAHGETRALYHHPPNRFAAEFLGRANILSAIALGITEVPGLVDVSCGGAVIRAFSQGSHHGYNKLLCIRPQHLSLTPRSAYSNRFNATLQSVHWQGDLTHLLCDVAGETVRMVLTHVNPLPRVGDKLALWFEPDDAVLIEV.

The 232-residue stretch at 19 to 250 (IVLDSLRVAY…PPNRFAAEFL (232 aa)) folds into the ABC transporter domain. 51-58 (GPSGSGKT) lines the ATP pocket.

It belongs to the ABC transporter superfamily. 2-aminoethylphosphonate importer (TC 3.A.1.11.5) family.

The protein resides in the cell inner membrane. Probably part of the PhnSTUV complex (TC 3.A.1.11.5) involved in 2-aminoethylphosphonate import. Probably responsible for energy coupling to the transport system. The polypeptide is Putative 2-aminoethylphosphonate import ATP-binding protein PhnT (phnT) (Salmonella paratyphi A (strain ATCC 9150 / SARB42)).